Consider the following 145-residue polypeptide: Small ribosomal subunit protein uS15 (145 aa).

The protein belongs to the universal ribosomal protein uS15 family. In terms of assembly, part of the 30S ribosomal subunit.

The polypeptide is Small ribosomal subunit protein uS15 (Thermoplasma acidophilum (strain ATCC 25905 / DSM 1728 / JCM 9062 / NBRC 15155 / AMRC-C165)).